Here is a 287-residue protein sequence, read N- to C-terminus: MATKPQDANTTSREAITSKADSPPRPTALIFDSGVGGLSVYQEIRQLLPNLHYIYAFDNVAFPYGEKSGEFIVERVLEIVTAVQQRHPLAIVVIACNTASTVSLPALRERFAFPVVGVVPAIKPAVRLTRNGVVGLLATRATVHASYTLDLIARFATDCKIELLGSSELVEVAETKLHGGVVPLEVLKKILHPWLSMREPPDTIVLGCTHFPLLTEELAQVLPEGTRMVDSGAAIARRTAWLISSQENVVSSQDENIAYCMALDEDTDALLPVLQSYGFPKLQKLPI.

Over residues 1–15 (MATKPQDANTTSREA) the composition is skewed to polar residues. The tract at residues 1-25 (MATKPQDANTTSREAITSKADSPPR) is disordered. Residues 32–33 (DS) and 64–65 (YG) each bind substrate. The active-site Proton donor/acceptor is C96. 97 to 98 (NT) lines the substrate pocket. The Proton donor/acceptor role is filled by C208. Residue 209–210 (TH) participates in substrate binding.

Belongs to the aspartate/glutamate racemases family.

The catalysed reaction is L-glutamate = D-glutamate. It functions in the pathway cell wall biogenesis; peptidoglycan biosynthesis. In terms of biological role, provides the (R)-glutamate required for cell wall biosynthesis. The polypeptide is Glutamate racemase (Yersinia pseudotuberculosis serotype O:3 (strain YPIII)).